Reading from the N-terminus, the 326-residue chain is N-acetyl-gamma-glutamyl-phosphate reductase (326 aa).

C155 is a catalytic residue.

Belongs to the NAGSA dehydrogenase family. Type 1 subfamily.

Its subcellular location is the cytoplasm. It catalyses the reaction N-acetyl-L-glutamate 5-semialdehyde + phosphate + NADP(+) = N-acetyl-L-glutamyl 5-phosphate + NADPH + H(+). The protein operates within amino-acid biosynthesis; L-arginine biosynthesis; N(2)-acetyl-L-ornithine from L-glutamate: step 3/4. Functionally, catalyzes the NADPH-dependent reduction of N-acetyl-5-glutamyl phosphate to yield N-acetyl-L-glutamate 5-semialdehyde. This chain is N-acetyl-gamma-glutamyl-phosphate reductase, found in Shewanella baltica (strain OS185).